A 210-amino-acid chain; its full sequence is ER membrane protein complex subunit 8 (210 aa).

The region spanning 4–150 (VKLTTQAYCK…IHVYEHHENR (147 aa)) is the MPN domain.

This sequence belongs to the EMC8/EMC9 family. In terms of assembly, component of the ER membrane protein complex (EMC). EMC8 and EMC9 are mutually exclusive subunits of the EMC complex. As to expression, expressed in liver, pancreas, heart, lung, kidney, brain, skeletal muscle, and placenta. Expression levels are highest in pancreas and moderate in heart, skeletal muscle, and placenta.

It is found in the endoplasmic reticulum membrane. Its function is as follows. Part of the endoplasmic reticulum membrane protein complex (EMC) that enables the energy-independent insertion into endoplasmic reticulum membranes of newly synthesized membrane proteins. Preferentially accommodates proteins with transmembrane domains that are weakly hydrophobic or contain destabilizing features such as charged and aromatic residues. Involved in the cotranslational insertion of multi-pass membrane proteins in which stop-transfer membrane-anchor sequences become ER membrane spanning helices. It is also required for the post-translational insertion of tail-anchored/TA proteins in endoplasmic reticulum membranes. By mediating the proper cotranslational insertion of N-terminal transmembrane domains in an N-exo topology, with translocated N-terminus in the lumen of the ER, controls the topology of multi-pass membrane proteins like the G protein-coupled receptors. By regulating the insertion of various proteins in membranes, it is indirectly involved in many cellular processes. The protein is ER membrane protein complex subunit 8 (EMC8) of Homo sapiens (Human).